A 293-amino-acid polypeptide reads, in one-letter code: 5'-3' exoribonuclease Rnm (293 aa).

Mn(2+) is bound by residues H17, H19, D24, H49, E76, H87, H202, D259, and H261.

It belongs to the PHP family. TrpH/YciV subfamily. Mn(2+) serves as cofactor.

It catalyses the reaction a ribonucleoside 3',5'-bisphosphate + H2O = a ribonucleoside 5'-phosphate + phosphate. Its function is as follows. Exoribonuclease that catalyzes the last steps of 5S, 16S and 23S rRNA 5'-end maturation. Removes 3 nucleotides (nt) from the 5' end of 5S, 16S and 23S rRNA precursors to generate the mature 5' ends. 5S and 23S rRNA maturation occurs more efficiently and accurately on ribosomal particles as compared to free RNA. Efficiently catalyzes the hydrolysis of the 3'-phosphate from 3',5'-bis-phosphonucleotides as well as the successive hydrolysis of 5'-phosphomononucleotides from the 5'-end of short pieces of RNA and DNA, with no specificity toward the identity of the nucleotide base. Is more efficient at hydrolyzing RNA oligonucleotides than DNA oligonucleotides. This enzyme can also hydrolyze annealed DNA duplexes, albeit at a catalytic efficiency lower than that of the corresponding single-stranded oligonucleotides. The sequence is that of 5'-3' exoribonuclease Rnm from Salmonella typhimurium (strain LT2 / SGSC1412 / ATCC 700720).